A 162-amino-acid chain; its full sequence is Caveolin-2 (162 aa).

Residues 1 to 86 (MGLETEKADV…FEISKYVMYK (86 aa)) lie on the Cytoplasmic side of the membrane. Tyr19 carries the post-translational modification Phosphotyrosine. Ser20 and Ser36 each carry phosphoserine. The segment at residues 87 to 107 (FLTVFLAIPLAFVAGILFATL) is an intramembrane region (helical). Residues 108-162 (SCLHIWIIMPFVKTCLMVLPSVQTIWKSVTDVIIAPLCTSVGRSFSSISLQLSHD) are Cytoplasmic-facing.

The protein belongs to the caveolin family. Homodimer. Caveolin-1 and -2 colocalize and form a stable hetero-oligomeric complex.

It is found in the golgi apparatus membrane. The protein localises to the cell membrane. It localises to the membrane. Its subcellular location is the caveola. Functionally, may act as a scaffolding protein within caveolar membranes. Interacts directly with G-protein alpha subunits and can functionally regulate their activity. Caveolin-2 may function as an accessory protein in conjunction with caveolin-1. This is Caveolin-2 (CAV2) from Microcebus murinus (Gray mouse lemur).